The primary structure comprises 69 residues: Conotoxin Eb6.9 (69 aa).

A signal peptide spans 1–17 (VLIIAVLFLTACQLTTA). The propeptide occupies 18–41 (ETYSRGRQKHRARRSTDKNSKWTR). Disulfide bonds link Cys43–Cys57, Cys50–Cys61, and Cys56–Cys68.

It belongs to the conotoxin O1 superfamily. Expressed by the venom duct.

The protein resides in the secreted. This is Conotoxin Eb6.9 (E1) from Conus ebraeus (Hebrew cone).